A 663-amino-acid polypeptide reads, in one-letter code: UvrABC system protein B (663 aa).

The span at 1–10 (MIDKRDDKPF) shows a compositional bias: basic and acidic residues. A disordered region spans residues 1–23 (MIDKRDDKPFKLKSKYKPSGDQP). Residues 31-418 (DNIEGGEKAQ…TNTIIEQIIR (388 aa)) form the Helicase ATP-binding domain. 44–51 (GATGTGKT) contributes to the ATP binding site. A Beta-hairpin motif is present at residues 97–120 (YYDYYQPEAYVPSSDTYIEKDSSV). Residues 435 to 601 (QMDDLLGEIN…TIKKDIRGLI (167 aa)) enclose the Helicase C-terminal domain. Positions 627 to 662 (KEAINALQKQMQEAAELLDFELAAQMRDLILELKLM) constitute a UVR domain.

Belongs to the UvrB family. As to quaternary structure, forms a heterotetramer with UvrA during the search for lesions. Interacts with UvrC in an incision complex.

Its subcellular location is the cytoplasm. Functionally, the UvrABC repair system catalyzes the recognition and processing of DNA lesions. A damage recognition complex composed of 2 UvrA and 2 UvrB subunits scans DNA for abnormalities. Upon binding of the UvrA(2)B(2) complex to a putative damaged site, the DNA wraps around one UvrB monomer. DNA wrap is dependent on ATP binding by UvrB and probably causes local melting of the DNA helix, facilitating insertion of UvrB beta-hairpin between the DNA strands. Then UvrB probes one DNA strand for the presence of a lesion. If a lesion is found the UvrA subunits dissociate and the UvrB-DNA preincision complex is formed. This complex is subsequently bound by UvrC and the second UvrB is released. If no lesion is found, the DNA wraps around the other UvrB subunit that will check the other stand for damage. The polypeptide is UvrABC system protein B (Streptococcus pyogenes serotype M1).